The sequence spans 384 residues: Toluene efflux pump periplasmic linker protein TtgA (384 aa).

An N-terminal signal peptide occupies residues 1–22 (MQFKPAVTALVSAVALATLLSG). A lipid anchor (N-palmitoyl cysteine) is attached at Cys23. Cys23 is lipidated: S-diacylglycerol cysteine. Residues 115–155 (LAERYKQLIDEQAVSKQEYDDANAKRLQAEASLKSAQIDLR) adopt a coiled-coil conformation. A disordered region spans residues 362-384 (ATNVKKPAGPDQANAAKADAKAE). The segment covering 368 to 378 (PAGPDQANAAK) has biased composition (low complexity).

This sequence belongs to the membrane fusion protein (MFP) (TC 8.A.1) family.

The protein resides in the cell inner membrane. The periplasmic linker protein component of a constitutive organic solvent efflux system. Involved in export of toluene, styrene, m-xylene, propylbenzene and ethylbenzene. Also exports AMP and the antibiotics carbenicillin, nalidixic acid, chloramphenicol and tetracycline. The chain is Toluene efflux pump periplasmic linker protein TtgA (ttgA) from Pseudomonas putida (strain DOT-T1E).